The sequence spans 615 residues: Putative HPr kinase/phosphorylase (615 aa).

480–487 (GKSGIGKS) is an ATP binding site.

Belongs to the HPrK/P family.

The catalysed reaction is [HPr protein]-L-serine + ATP = [HPr protein]-O-phospho-L-serine + ADP + H(+). It catalyses the reaction [HPr protein]-O-phospho-L-serine + phosphate + H(+) = [HPr protein]-L-serine + diphosphate. In terms of biological role, catalyzes the ATP- as well as the pyrophosphate-dependent phosphorylation of a specific serine residue in HPr, a phosphocarrier protein of the phosphoenolpyruvate-dependent sugar phosphotransferase system (PTS). HprK/P also catalyzes the pyrophosphate-producing, inorganic phosphate-dependent dephosphorylation (phosphorolysis) of seryl-phosphorylated HPr (P-Ser-HPr). The protein is Putative HPr kinase/phosphorylase (hprK) of Fusobacterium nucleatum subsp. nucleatum (strain ATCC 25586 / DSM 15643 / BCRC 10681 / CIP 101130 / JCM 8532 / KCTC 2640 / LMG 13131 / VPI 4355).